Consider the following 132-residue polypeptide: Fluoride-specific ion channel FluC 1 (132 aa).

4 helical membrane-spanning segments follow: residues 9-29 (LAAV…LSAL), 35-55 (ASWP…VGYF), 72-89 (LLGT…TMQV), and 100-120 (WGLA…AVHL). Residues G79 and T82 each coordinate Na(+).

Belongs to the fluoride channel Fluc/FEX (TC 1.A.43) family.

The protein localises to the cell membrane. The enzyme catalyses fluoride(in) = fluoride(out). Na(+) is not transported, but it plays an essential structural role and its presence is essential for fluoride channel function. In terms of biological role, fluoride-specific ion channel. Important for reducing fluoride concentration in the cell, thus reducing its toxicity. The chain is Fluoride-specific ion channel FluC 1 from Mycolicibacterium paratuberculosis (strain ATCC BAA-968 / K-10) (Mycobacterium paratuberculosis).